We begin with the raw amino-acid sequence, 367 residues long: Nuclear hormone receptor-like 1 (367 aa).

A DNA-binding region (nuclear receptor) is located at residues 32 to 107; sequence GQPCVVCGDD…NGMTKSLVLN (76 aa). NR C4-type zinc fingers lie at residues 35-55 and 71-95; these read CVVC…CEGC and CKSI…FQKC. Residues 145–367 enclose the NR LBD domain; sequence EFQSRIDQVT…IANILLFKFT (223 aa).

The protein belongs to the nuclear hormone receptor family.

The protein localises to the nucleus. The protein is Nuclear hormone receptor-like 1 (nhr-1) of Onchocerca volvulus.